The following is a 238-amino-acid chain: Ribosomal RNA small subunit methyltransferase G (238 aa).

Residues Gly77, Phe82, 128–129 (AE), and Arg147 each bind S-adenosyl-L-methionine.

This sequence belongs to the methyltransferase superfamily. RNA methyltransferase RsmG family.

It localises to the cytoplasm. Functionally, specifically methylates the N7 position of guanine in position 535 of 16S rRNA. This Listeria innocua serovar 6a (strain ATCC BAA-680 / CLIP 11262) protein is Ribosomal RNA small subunit methyltransferase G.